The primary structure comprises 455 residues: Membrane protein Pbs54 (455 aa).

A helical membrane pass occupies residues 12-32; sequence IISIIILILRISLFSCAEHLF. N-linked (GlcNAc...) asparagine glycans are attached at residues Asn-41, Asn-102, and Asn-125. 6 helical membrane-spanning segments follow: residues 181-201, 220-240, 244-264, 285-305, 312-332, and 346-366; these read IFLIFLISYMYWFCIKILFNG, FIFFVILKISLIFLPAILSCI, ILTFYFYSISMSPCKDIFYLF, ILIGNVIYNFLCPPKIIIIFI, FLVKIICLTIILFISFLIFFL, and FVFSFTSSYLIVSCFAYFWNI. N-linked (GlcNAc...) asparagine glycosylation occurs at Asn-373. A helical membrane pass occupies residues 398 to 418; the sequence is NMFALFMIFAMSILSIIFPRI.

Its subcellular location is the cell projection. It is found in the cilium. The protein resides in the flagellum. The protein localises to the cell membrane. Plays a role in gamete fertilization. Required for the successful transmission of parasites to mosquito. The sequence is that of Membrane protein Pbs54 from Plasmodium berghei (strain Anka).